The chain runs to 226 residues: MKAVVLLSGGMDSLVTTAIANAQGFELAAMHVNYGQRTWHKELEAFRLIADHYAIGERLEINADYLAQIGGSSLTDYSMPISGADLQGLSIPTSYVPFRNAGFLSMAVSWAEVIGAERIFIGAVEEDSSGYPDCRKVFYDAFNAVIALGTKPETSIAIMTPLIEMQKSEIVRKGMELTAPFELSWSCYKSEGKACGVCDSCALRLRAFERAGMRDPIDYEQRPDYI.

ATP is bound at residue 7–17 (LSGGMDSLVTT). Zn(2+) is bound by residues cysteine 187, cysteine 195, cysteine 198, and cysteine 201.

Belongs to the QueC family. It depends on Zn(2+) as a cofactor.

It catalyses the reaction 7-carboxy-7-deazaguanine + NH4(+) + ATP = 7-cyano-7-deazaguanine + ADP + phosphate + H2O + H(+). It functions in the pathway purine metabolism; 7-cyano-7-deazaguanine biosynthesis. Functionally, catalyzes the ATP-dependent conversion of 7-carboxy-7-deazaguanine (CDG) to 7-cyano-7-deazaguanine (preQ(0)). This Chlorobium phaeobacteroides (strain DSM 266 / SMG 266 / 2430) protein is 7-cyano-7-deazaguanine synthase.